The chain runs to 253 residues: uncharacterized protein (253 aa).

This is an uncharacterized protein from Haemophilus influenzae (strain ATCC 51907 / DSM 11121 / KW20 / Rd).